The following is a 101-amino-acid chain: Small ribosomal subunit protein uS10 (101 aa).

Belongs to the universal ribosomal protein uS10 family. Part of the 30S ribosomal subunit.

In terms of biological role, involved in the binding of tRNA to the ribosomes. This Bacteroides fragilis (strain ATCC 25285 / DSM 2151 / CCUG 4856 / JCM 11019 / LMG 10263 / NCTC 9343 / Onslow / VPI 2553 / EN-2) protein is Small ribosomal subunit protein uS10.